Here is a 513-residue protein sequence, read N- to C-terminus: ATP synthase subunit alpha 2 (513 aa).

Residue 169 to 176 participates in ATP binding; sequence GDRQTGKT.

This sequence belongs to the ATPase alpha/beta chains family. In terms of assembly, F-type ATPases have 2 components, CF(1) - the catalytic core - and CF(0) - the membrane proton channel. CF(1) has five subunits: alpha(3), beta(3), gamma(1), delta(1), epsilon(1). CF(0) has three main subunits: a(1), b(2) and c(9-12). The alpha and beta chains form an alternating ring which encloses part of the gamma chain. CF(1) is attached to CF(0) by a central stalk formed by the gamma and epsilon chains, while a peripheral stalk is formed by the delta and b chains.

The protein localises to the cell inner membrane. The enzyme catalyses ATP + H2O + 4 H(+)(in) = ADP + phosphate + 5 H(+)(out). Functionally, produces ATP from ADP in the presence of a proton gradient across the membrane. The alpha chain is a regulatory subunit. The sequence is that of ATP synthase subunit alpha 2 from Photobacterium profundum (strain SS9).